The primary structure comprises 338 residues: Biotin synthase (338 aa).

The region spanning 59–284 (EEVEIEGIVS…RTTLRFAGGR (226 aa)) is the Radical SAM core domain. The [4Fe-4S] cluster site is built by cysteine 74, cysteine 78, and cysteine 81. [2Fe-2S] cluster-binding residues include cysteine 117, cysteine 209, and arginine 279.

This sequence belongs to the radical SAM superfamily. Biotin synthase family. Homodimer. [4Fe-4S] cluster is required as a cofactor. Requires [2Fe-2S] cluster as cofactor.

It catalyses the reaction (4R,5S)-dethiobiotin + (sulfur carrier)-SH + 2 reduced [2Fe-2S]-[ferredoxin] + 2 S-adenosyl-L-methionine = (sulfur carrier)-H + biotin + 2 5'-deoxyadenosine + 2 L-methionine + 2 oxidized [2Fe-2S]-[ferredoxin]. The protein operates within cofactor biosynthesis; biotin biosynthesis; biotin from 7,8-diaminononanoate: step 2/2. Its function is as follows. Catalyzes the conversion of dethiobiotin (DTB) to biotin by the insertion of a sulfur atom into dethiobiotin via a radical-based mechanism. The polypeptide is Biotin synthase (Corynebacterium urealyticum (strain ATCC 43042 / DSM 7109)).